The following is a 426-amino-acid chain: Histidine--tRNA ligase (426 aa).

This sequence belongs to the class-II aminoacyl-tRNA synthetase family. In terms of assembly, homodimer.

It localises to the cytoplasm. It carries out the reaction tRNA(His) + L-histidine + ATP = L-histidyl-tRNA(His) + AMP + diphosphate + H(+). The protein is Histidine--tRNA ligase of Legionella pneumophila subsp. pneumophila (strain Philadelphia 1 / ATCC 33152 / DSM 7513).